The sequence spans 444 residues: EMI domain-containing protein 1 (444 aa).

Positions 1–22 are cleaved as a signal peptide; it reads MGGPRAWTLLCLGLLLPGGGAA. The EMI domain maps to 33 to 106; that stretch reads RRNWCSYVVT…PGHSGVTCEE (74 aa). 3 disulfide bridges follow: Cys37-Cys96, Cys62-Cys68, and Cys95-Cys104. O-linked (Fuc) threonine glycosylation occurs at Thr42. Residue Asn51 is glycosylated (N-linked (GlcNAc...) asparagine). N-linked (GlcNAc...) asparagine glycosylation occurs at Asn136. Disordered stretches follow at residues 161–374 and 404–444; these read EQTV…KSHW and PDLG…SERS. The 151-residue stretch at 221 to 371 folds into the Collagen-like domain; it reads GPPGPQGPPG…PGPKGDPGEK (151 aa). Residues 222–231 are compositionally biased toward pro residues; the sequence is PPGPQGPPGR. Positions 232-243 are enriched in low complexity; sequence PGQTGAAGTPGK. Composition is skewed to pro residues over residues 244–264 and 292–311; these read MGPP…PVGP and PTGP…PGLP.

In terms of assembly, homo- or heteromers. In terms of processing, O-fucosylated at Thr-42 within the EMI domain by FUT10/POFUT3 and FUT11/POFUT4.

The protein resides in the secreted. It is found in the extracellular space. The protein localises to the extracellular matrix. The polypeptide is EMI domain-containing protein 1 (Emid1) (Mus musculus (Mouse)).